The primary structure comprises 793 residues: Splicing factor 3A subunit 1 (793 aa).

The disordered stretch occupies residues 1–43; the sequence is MPAGPVQAVPPPPPVPTEPKQPTEEEASSKEDSAPSKPVVGII. Over residues 8–19 the composition is skewed to pro residues; it reads AVPPPPPVPTEP. Lys-20 participates in a covalent cross-link: Glycyl lysine isopeptide (Lys-Gly) (interchain with G-Cter in SUMO2). The segment covering 21–34 has biased composition (basic and acidic residues); sequence QPTEEEASSKEDSA. Residues 52–94 form an SURP motif 1 repeat; sequence IVDKTASFVARNGPEFEARIRQNEINNPKFNFLNPNDPYHAYY. Position 55 is an N6-acetyllysine (Lys-55). Lys-131 is covalently cross-linked (Glycyl lysine isopeptide (Lys-Gly) (interchain with G-Cter in SUMO2)). Residues 166–208 form an SURP motif 2 repeat; the sequence is VVKLTAQFVARNGRQFLTQLMQKEQRNYQFDFLRPQHSLFNYF. Residues 318 to 428 form a disordered region; that stretch reads GESEEVEMEV…KIPASKMQEH (111 aa). Ser-320, Ser-329, and Ser-359 each carry phosphoserine. Acidic residues-rich tracts occupy residues 320–334 and 354–364; these read SEEV…EEDD and DMDEGSDDEEE. Residues 368–384 show a composition bias toward pro residues; sequence VPPPPETPMPPPLPPTP. A compositionally biased stretch (basic and acidic residues) spans 388 to 397; sequence IVRKDYDPKA. Ser-413 is modified (phosphoserine). Lys-424 participates in a covalent cross-link: Glycyl lysine isopeptide (Lys-Gly) (interchain with G-Cter in SUMO2). Ser-451 carries the phosphoserine modification. Phosphotyrosine is present on Tyr-456. The segment covering 488-502 has biased composition (basic and acidic residues); sequence IGEEEIQKPEEKVTW. Disordered regions lie at residues 488–518, 530–584, and 665–688; these read IGEE…AAQA, HKAK…TMPP, and APMP…LKTE. A Glycyl lysine isopeptide (Lys-Gly) (interchain with G-Cter in SUMO2) cross-link involves residue Lys-499. Ser-508 bears the Phosphoserine mark. A compositionally biased stretch (polar residues) spans 509–518; that stretch reads MARTQQAAQA. A Glycyl lysine isopeptide (Lys-Gly) (interchain with G-Cter in SUMO2) cross-link involves residue Lys-542. Residues 665–675 are compositionally biased toward pro residues; sequence APMPPVHPPPP. Positions 680–702 are required and sufficient for nuclear import; it reads PTSKKLKTEDSLMPEEEFLRRNK. Lys-686 is covalently cross-linked (Glycyl lysine isopeptide (Lys-Gly) (interchain with G-Cter in SUMO2)). Positions 707-793 constitute a Ubiquitin-like domain; that stretch reads IKVQVPNMQD…ALKERGGRKK (87 aa). At Tyr-759 the chain carries Phosphotyrosine.

In terms of assembly, component of the 17S U2 SnRNP complex, a ribonucleoprotein complex that contains small nuclear RNA (snRNA) U2 and a number of specific proteins. Part of the SF3A subcomplex of the 17S U2 SnRNP complex which is composed of three subunits; SF3A3/SAP61, SF3A2/SAP62 and SF3A1/SAP114. SF3A associates with the splicing factor SF3B and a 12S RNA unit to form the mature 17S U2 small nuclear ribonucleoprotein complex (17S U2 snRNP). SF3A1 functions as a scaffold that interacts directly with both SF3A2 and SF3A3. Identified in the spliceosome 'E' complex, a precursor of the spliceosome 'A' complex. Identified in the spliceosome 'A' and 'B' complexes. Identified in the spliceosome 'C' complex. Interacts with P2RX6; resulting in a reduction of the splicing activity. As to expression, ubiquitously expressed.

It localises to the nucleus. It is found in the nucleus speckle. Component of the 17S U2 SnRNP complex of the spliceosome, a large ribonucleoprotein complex that removes introns from transcribed pre-mRNAs. The 17S U2 SnRNP complex (1) directly participates in early spliceosome assembly and (2) mediates recognition of the intron branch site during pre-mRNA splicing by promoting the selection of the pre-mRNA branch-site adenosine, the nucleophile for the first step of splicing. Within the 17S U2 SnRNP complex, SF3A1 is part of the SF3A subcomplex that contributes to the assembly of the 17S U2 snRNP, and the subsequent assembly of the pre-spliceosome 'E' complex and the pre-catalytic spliceosome 'A' complex. Involved in pre-mRNA splicing as a component of pre-catalytic spliceosome 'B' complexes. In Homo sapiens (Human), this protein is Splicing factor 3A subunit 1 (SF3A1).